The following is a 1012-amino-acid chain: Autotransporter adhesin BpaC (1012 aa).

The first 71 residues, 1–71, serve as a signal peptide directing secretion; that stretch reads MNRIFKSIWC…PFAEEAMAAN (71 aa). Positions 72–921 are surface exposed passenger domain; it reads NAGVCLTYNG…VGQLNSAVSG (850 aa). Disordered stretches follow at residues 420–746 and 785–809; these read GLQG…AGAT and ENST…ESAA. Residues 427 to 442 are compositionally biased toward polar residues; it reads ANTGTASGDNSTASGD. Residues 443 to 504 are compositionally biased toward low complexity; that stretch reads NATASGTNST…ANGTNSTASG (62 aa). The span at 505-519 shows a compositional bias: polar residues; it reads DNSTASGTNASATGE. The span at 520 to 588 shows a compositional bias: low complexity; sequence NSTATGTDST…ANGTNSTASG (69 aa). The span at 589-603 shows a compositional bias: polar residues; sequence DNSTASGTNASATGE. Residues 604–630 show a composition bias toward low complexity; that stretch reads NSTATGTDSTASGSNSTANGTNSTASG. The segment covering 631–645 has biased composition (polar residues); that stretch reads DNSTASGTNASATGE. Low complexity-rich tracts occupy residues 646–700 and 708–746; these read NSTA…TASG and TNAS…AGAT. The tract at residues 922-959 is outer membrane translocation of the passenger domain; that stretch reads IRNQMDGMQGQIDTLARDAYSGIAAATALTMIPDVDPG. Positions 960-1012 are translocator domain; it reads KTLAVGIGTANFKGYQASALGATARITQNLKVKTGVSYSGSNYVWGAGMSYQW.

It belongs to the autotransporter-2 (AT-2) (TC 1.B.40) family. Homotrimer.

It is found in the cell surface. Its subcellular location is the cell outer membrane. In terms of biological role, involved in virulence. Mediates adherence to human respiratory epithelial cells. This chain is Autotransporter adhesin BpaC, found in Burkholderia mallei (strain ATCC 23344).